The following is a 157-amino-acid chain: Protein-export protein SecB (157 aa).

This sequence belongs to the SecB family. As to quaternary structure, homotetramer, a dimer of dimers. One homotetramer interacts with 1 SecA dimer.

Its subcellular location is the cytoplasm. In terms of biological role, one of the proteins required for the normal export of preproteins out of the cell cytoplasm. It is a molecular chaperone that binds to a subset of precursor proteins, maintaining them in a translocation-competent state. It also specifically binds to its receptor SecA. In Dichelobacter nodosus (strain VCS1703A), this protein is Protein-export protein SecB.